The chain runs to 151 residues: Putative pre-16S rRNA nuclease (151 aa).

The protein belongs to the YqgF nuclease family.

It localises to the cytoplasm. Functionally, could be a nuclease involved in processing of the 5'-end of pre-16S rRNA. The chain is Putative pre-16S rRNA nuclease from Gloeothece citriformis (strain PCC 7424) (Cyanothece sp. (strain PCC 7424)).